A 58-amino-acid polypeptide reads, in one-letter code: Small ribosomal subunit protein bS21 (58 aa).

A compositionally biased stretch (basic and acidic residues) spans 32–42; the sequence is IRKREHYEKPS. The interval 32 to 58 is disordered; the sequence is IRKREHYEKPSVKRKKKSEAARKRKFK. The segment covering 43 to 58 has biased composition (basic residues); the sequence is VKRKKKSEAARKRKFK.

Belongs to the bacterial ribosomal protein bS21 family.

The polypeptide is Small ribosomal subunit protein bS21 (Lachnoclostridium phytofermentans (strain ATCC 700394 / DSM 18823 / ISDg) (Clostridium phytofermentans)).